The primary structure comprises 269 residues: uncharacterized protein (269 aa).

It to T.pallidum TP0678.

This is an uncharacterized protein from Borreliella burgdorferi (strain ATCC 35210 / DSM 4680 / CIP 102532 / B31) (Borrelia burgdorferi).